The following is a 396-amino-acid chain: Elongation factor Tu (396 aa).

In terms of domain architecture, tr-type G spans 10 to 206; sequence KPHVNVGTIG…ALDTYIPTPE (197 aa). The segment at 19 to 26 is G1; the sequence is GHVDHGKT. A GTP-binding site is contributed by 19-26; sequence GHVDHGKT. T26 is a Mg(2+) binding site. Positions 60–64 are G2; the sequence is GITIN. The segment at 81 to 84 is G3; the sequence is DCPG. GTP-binding positions include 81-85 and 136-139; these read DCPGH and NKAD. Residues 136 to 139 are G4; that stretch reads NKAD. Residues 174–176 form a G5 region; it reads SAK.

The protein belongs to the TRAFAC class translation factor GTPase superfamily. Classic translation factor GTPase family. EF-Tu/EF-1A subfamily. Monomer.

It is found in the cytoplasm. The catalysed reaction is GTP + H2O = GDP + phosphate + H(+). In terms of biological role, GTP hydrolase that promotes the GTP-dependent binding of aminoacyl-tRNA to the A-site of ribosomes during protein biosynthesis. The protein is Elongation factor Tu of Bordetella bronchiseptica (strain ATCC BAA-588 / NCTC 13252 / RB50) (Alcaligenes bronchisepticus).